The following is a 371-amino-acid chain: Chaperone protein DnaJ (371 aa).

Residues 6–71 form the J domain; sequence DYYEILGVEK…QKRAQYDRFG (66 aa). The disordered stretch occupies residues 104-123; that stretch reads GGMGGQQRQRRNRNEPRRGS. Residues 139-217 form a CR-type zinc finger; it reads GIEKEIEFDT…CKGKGRVAEH (79 aa). Residues cysteine 152, cysteine 155, cysteine 169, cysteine 172, cysteine 191, cysteine 194, cysteine 205, and cysteine 208 each contribute to the Zn(2+) site. CXXCXGXG motif repeat units follow at residues 152 to 159, 169 to 176, 191 to 198, and 205 to 212; these read CDECKGTG, CGTCGGSG, CPTCHGQG, and CKPCKGKG.

This sequence belongs to the DnaJ family. In terms of assembly, homodimer. It depends on Zn(2+) as a cofactor.

It localises to the cytoplasm. Participates actively in the response to hyperosmotic and heat shock by preventing the aggregation of stress-denatured proteins and by disaggregating proteins, also in an autonomous, DnaK-independent fashion. Unfolded proteins bind initially to DnaJ; upon interaction with the DnaJ-bound protein, DnaK hydrolyzes its bound ATP, resulting in the formation of a stable complex. GrpE releases ADP from DnaK; ATP binding to DnaK triggers the release of the substrate protein, thus completing the reaction cycle. Several rounds of ATP-dependent interactions between DnaJ, DnaK and GrpE are required for fully efficient folding. Also involved, together with DnaK and GrpE, in the DNA replication of plasmids through activation of initiation proteins. In Bdellovibrio bacteriovorus (strain ATCC 15356 / DSM 50701 / NCIMB 9529 / HD100), this protein is Chaperone protein DnaJ.